A 512-amino-acid polypeptide reads, in one-letter code: Maturase K (512 aa).

The protein belongs to the intron maturase 2 family. MatK subfamily.

It is found in the plastid. Its subcellular location is the chloroplast. Functionally, usually encoded in the trnK tRNA gene intron. Probably assists in splicing its own and other chloroplast group II introns. The chain is Maturase K from Oenothera argillicola (Appalachian evening primrose).